A 176-amino-acid polypeptide reads, in one-letter code: Prepronociceptin (176 aa).

Residues 1–19 form the signal peptide; the sequence is MKVLLCDLLLLSLFSSVFS. 2 consecutive propeptides follow at residues 20–95 and 169–176; these read SCQR…MQHL and TLHQNGNV.

It belongs to the opioid neuropeptide precursor family. In terms of processing, specific enzymatic cleavages at paired basic residues probably yield other active peptides besides nociceptin. Post-translationally, the N-terminal domain contains 6 conserved cysteines thought to be involved in disulfide bonding and/or processing. Predominantly expressed in the brain and spinal cord. Also expressed and secreted by peripheral blood neutrophils following degranulation.

The protein localises to the secreted. Ligand of the opioid receptor-like receptor OPRL1. It may act as a transmitter in the brain by modulating nociceptive and locomotor behavior. May be involved in neuronal differentiation and development. Its function is as follows. Blocks nociceptin action in pain transmission by inhibiting nociceptin-induced hyperalgesia and allodynia. Functionally, has potent analgesic activity. This chain is Prepronociceptin (PNOC), found in Homo sapiens (Human).